A 251-amino-acid polypeptide reads, in one-letter code: tRNA (guanine-N(1)-)-methyltransferase (251 aa).

S-adenosyl-L-methionine contacts are provided by residues glycine 113 and methionine 133–leucine 138.

It belongs to the RNA methyltransferase TrmD family. As to quaternary structure, homodimer.

Its subcellular location is the cytoplasm. The enzyme catalyses guanosine(37) in tRNA + S-adenosyl-L-methionine = N(1)-methylguanosine(37) in tRNA + S-adenosyl-L-homocysteine + H(+). Specifically methylates guanosine-37 in various tRNAs. This is tRNA (guanine-N(1)-)-methyltransferase from Sodalis glossinidius (strain morsitans).